The primary structure comprises 142 residues: Fluoride-specific ion channel FluC 1 (142 aa).

A run of 4 helical transmembrane segments spans residues 17-37 (AWVSAGSVVGGLTRYLVGLAL), 42-62 (GFPFATLFINATGSLIIGFYA), 80-100 (FVMTGFCGGYTTFSAFSLETF), and 109-129 (YIALAYVASSVVCWLVSVWLG). Na(+) contacts are provided by G87 and T90.

This sequence belongs to the fluoride channel Fluc/FEX (TC 1.A.43) family.

It localises to the cell inner membrane. It carries out the reaction fluoride(in) = fluoride(out). With respect to regulation, na(+) is not transported, but it plays an essential structural role and its presence is essential for fluoride channel function. Its function is as follows. Fluoride-specific ion channel. Important for reducing fluoride concentration in the cell, thus reducing its toxicity. The polypeptide is Fluoride-specific ion channel FluC 1 (Bradyrhizobium diazoefficiens (strain JCM 10833 / BCRC 13528 / IAM 13628 / NBRC 14792 / USDA 110)).